We begin with the raw amino-acid sequence, 268 residues long: Taurine import ATP-binding protein TauB (268 aa).

The 233-residue stretch at 4-236 (LSIENISMRF…MGVNADLREV (233 aa)) folds into the ABC transporter domain. Position 41 to 48 (41 to 48 (GPSGCGKT)) interacts with ATP.

This sequence belongs to the ABC transporter superfamily. Taurine importer (TC 3.A.1.17.1) family. In terms of assembly, the complex is composed of two ATP-binding proteins (TauB), two transmembrane proteins (TauC) and a solute-binding protein (TauA).

Its subcellular location is the cell inner membrane. The enzyme catalyses taurine(out) + ATP + H2O = taurine(in) + ADP + phosphate + H(+). Part of the ABC transporter complex TauABC involved in taurine import. Responsible for energy coupling to the transport system. This is Taurine import ATP-binding protein TauB from Ruegeria pomeroyi (strain ATCC 700808 / DSM 15171 / DSS-3) (Silicibacter pomeroyi).